Here is a 297-residue protein sequence, read N- to C-terminus: Streptogrisin-A (297 aa).

Positions 1–38 (MTFKRFSPLSSTSRYARLLAVASGLVAAAALATPSAVA) are cleaved as a signal peptide. The propeptide occupies 39 to 115 (APEAESKATV…VKRAEGKFTP (77 aa)). Cys-130 and Cys-150 form a disulfide bridge. Residues His-149, Asp-171, and Ser-253 each act as charge relay system in the active site. An intrachain disulfide couples Cys-247 to Cys-274.

The protein belongs to the peptidase S1 family. In terms of assembly, monomer.

It carries out the reaction Hydrolysis of proteins with specificity similar to chymotrypsin.. Functionally, has a primary specificity for large aliphatic or aromatic amino acids. The protein is Streptogrisin-A (sprA) of Streptomyces griseus.